The chain runs to 339 residues: Protein RecA (339 aa).

Position 74-81 (74-81 (GPESSGKT)) interacts with ATP.

This sequence belongs to the RecA family.

It localises to the cytoplasm. Can catalyze the hydrolysis of ATP in the presence of single-stranded DNA, the ATP-dependent uptake of single-stranded DNA by duplex DNA, and the ATP-dependent hybridization of homologous single-stranded DNAs. It interacts with LexA causing its activation and leading to its autocatalytic cleavage. This is Protein RecA from Phytoplasma mali (strain AT).